Consider the following 485-residue polypeptide: Aspartyl/glutamyl-tRNA(Asn/Gln) amidotransferase subunit B (485 aa).

The protein belongs to the GatB/GatE family. GatB subfamily. In terms of assembly, heterotrimer of A, B and C subunits.

It catalyses the reaction L-glutamyl-tRNA(Gln) + L-glutamine + ATP + H2O = L-glutaminyl-tRNA(Gln) + L-glutamate + ADP + phosphate + H(+). The enzyme catalyses L-aspartyl-tRNA(Asn) + L-glutamine + ATP + H2O = L-asparaginyl-tRNA(Asn) + L-glutamate + ADP + phosphate + 2 H(+). In terms of biological role, allows the formation of correctly charged Asn-tRNA(Asn) or Gln-tRNA(Gln) through the transamidation of misacylated Asp-tRNA(Asn) or Glu-tRNA(Gln) in organisms which lack either or both of asparaginyl-tRNA or glutaminyl-tRNA synthetases. The reaction takes place in the presence of glutamine and ATP through an activated phospho-Asp-tRNA(Asn) or phospho-Glu-tRNA(Gln). The polypeptide is Aspartyl/glutamyl-tRNA(Asn/Gln) amidotransferase subunit B (Cupriavidus pinatubonensis (strain JMP 134 / LMG 1197) (Cupriavidus necator (strain JMP 134))).